The chain runs to 618 residues: Probable Xaa-Pro aminopeptidase P (618 aa).

Mn(2+)-binding residues include Asp-414, Asp-425, Glu-523, and Glu-537.

It belongs to the peptidase M24B family. It depends on Mn(2+) as a cofactor.

The enzyme catalyses Release of any N-terminal amino acid, including proline, that is linked to proline, even from a dipeptide or tripeptide.. In terms of biological role, catalyzes the removal of a penultimate prolyl residue from the N-termini of peptides. This chain is Probable Xaa-Pro aminopeptidase P (AMPP), found in Metarhizium robertsii (strain ARSEF 23 / ATCC MYA-3075) (Metarhizium anisopliae (strain ARSEF 23)).